The following is a 298-amino-acid chain: Probable protein phosphatase 2C 26 (298 aa).

In terms of domain architecture, PPM-type phosphatase spans 48–295 (SVGIHAIPHP…DDVTVIVAKV (248 aa)). Residues Asp-82, Gly-83, Asp-213, and Asp-286 each coordinate Mn(2+).

Belongs to the PP2C family. The cofactor is Mg(2+). Mn(2+) serves as cofactor.

The catalysed reaction is O-phospho-L-seryl-[protein] + H2O = L-seryl-[protein] + phosphate. It catalyses the reaction O-phospho-L-threonyl-[protein] + H2O = L-threonyl-[protein] + phosphate. The sequence is that of Probable protein phosphatase 2C 26 from Arabidopsis thaliana (Mouse-ear cress).